Consider the following 554-residue polypeptide: MFCIQCEQTIRTPAGNGCSYAQGMCGKLAATSDLQDLLIYMLKGVSAWAVKARELGLPPTEADTFVPKAFFATLTNVNFDDERIIEYARKAESLRNVLKTQCTEAAQKAGIRLESLPDSASVLLGTSKPELLEQAKAALPNLGKDDIHEDVMALRLLCLYGLKGAAAYMEHARVLEQQSADIAAEFHRIMAFLGTDSVDADALFTVAMDIGQLNFKVMAMLDEGETAAFGHPEPTQVNTKPVKGKAILVSGHDMKDLELILKQTQGKGINVYTHGEMLPALAYPEFKQYPHLVGNYGSAWQNQQKEFANFPGAVVMTSNCIIDPNVGQYADRIFTRSIVGWPGVVHLEGDDFSAVIEKALSLEGFLYDEISHQITIGFARNALMAAAPAVVENVKNGSIRHFFLVGGCDGDKAERSYFTDFAKATPNDSLILTLGCGKYKFNKLEFGDINGIPRLLDIGQCNDAYSAIQLAIALSEVFECDINELPLSLVLSWFEQKAIVILLTLLSLGVKNIRTGPTPPAFLTPNLLKVLEDKFGLKNTTTVEADLNAILNVA.

4 residues coordinate [2Fe-2S] cluster: C3, C6, C18, and C25. Hybrid [4Fe-2O-2S] cluster contacts are provided by H252, E276, C320, C408, C436, C461, E495, and K497. A Cysteine persulfide modification is found at C408.

This sequence belongs to the HCP family. Requires [2Fe-2S] cluster as cofactor. It depends on hybrid [4Fe-2O-2S] cluster as a cofactor.

It is found in the cytoplasm. It catalyses the reaction A + NH4(+) + H2O = hydroxylamine + AH2 + H(+). Functionally, catalyzes the reduction of hydroxylamine to form NH(3) and H(2)O. This Shewanella amazonensis (strain ATCC BAA-1098 / SB2B) protein is Hydroxylamine reductase.